Here is a 405-residue protein sequence, read N- to C-terminus: Pentatricopeptide repeat-containing protein At1g11630, mitochondrial (405 aa).

A mitochondrion-targeting transit peptide spans 1–72 (MAFLFRIRTS…RSTSLSPDYH (72 aa)). PPR repeat units follow at residues 74 to 108 (DRII…QPDP), 110 to 144 (SESF…EIPR), 145 to 180 (TVKS…GIEP), 181 to 215 (DLET…WIKP), 216 to 250 (TAAS…GVHV), 251 to 285 (GVAT…RMRP), 286 to 320 (NSVT…GYKP), 321 to 355 (DSEC…NWVP), and 356 to 386 (SFSV…VKEK).

This sequence belongs to the PPR family. P subfamily.

It is found in the mitochondrion. The polypeptide is Pentatricopeptide repeat-containing protein At1g11630, mitochondrial (Arabidopsis thaliana (Mouse-ear cress)).